We begin with the raw amino-acid sequence, 653 residues long: Thioredoxin domain-containing protein 3 homolog (653 aa).

The Thioredoxin domain maps to 9–114 (LQETLNTQEA…QETIQETLKN (106 aa)). A disulfide bond links C38 and C41. The interval 155 to 299 (KQITVALIKP…FFFPDFKPPT (145 aa)) is NDK 1. Positions 300 to 323 (YRSAKSAASRASGRRSKTPSQKPR) are disordered. Low complexity predominate over residues 301–310 (RSAKSAASRA). NDK stretches follow at residues 324 to 459 (LQRT…IFHV) and 459 to 597 (VEQT…QFDW). The disordered stretch occupies residues 603–653 (QAEEGEVNETSGEQPTDEQSGETEKTEEDGEHEGAQSDQQQAVSEAMEKEE). Acidic residues predominate over residues 617–633 (PTDEQSGETEKTEEDGE).

The protein in the C-terminal section; belongs to the NDK family. Testis-specific.

May be required during the final stages of sperm tail maturation. May act by reducing disulfide bonds within the sperm components. This chain is Thioredoxin domain-containing protein 3 homolog (CiIC3), found in Ciona intestinalis (Transparent sea squirt).